A 601-amino-acid chain; its full sequence is ATP-dependent lipid A-core flippase (601 aa).

The region spanning 28 to 328 is the ABC transmembrane type-1 domain; that stretch reads LLSVVGLIVY…LTRVNAEFQR (301 aa). The next 6 membrane-spanning stretches (helical) occupy residues 32-52, 81-101, 160-180, 183-203, 267-287, and 296-316; these read VGLI…GPFI, VLLM…FANF, ALIS…LMFY, WKLS…ITIV, AVSQ…VLYA, and DLTA…LQPI. Positions 360–597 constitute an ABC transporter domain; sequence LRFDNVSFSY…GGMYAKLYQM (238 aa). 394 to 401 provides a ligand contact to ATP; the sequence is GRSGSGKS.

It belongs to the ABC transporter superfamily. Lipid exporter (TC 3.A.1.106) family. In terms of assembly, homodimer.

It is found in the cell inner membrane. The enzyme catalyses ATP + H2O + lipid A-core oligosaccharideSide 1 = ADP + phosphate + lipid A-core oligosaccharideSide 2.. Involved in lipopolysaccharide (LPS) biosynthesis. Translocates lipid A-core from the inner to the outer leaflet of the inner membrane. Transmembrane domains (TMD) form a pore in the inner membrane and the ATP-binding domain (NBD) is responsible for energy generation. The polypeptide is ATP-dependent lipid A-core flippase (Shewanella oneidensis (strain ATCC 700550 / JCM 31522 / CIP 106686 / LMG 19005 / NCIMB 14063 / MR-1)).